The primary structure comprises 73 residues: Conotoxin Cl14.8 (73 aa).

The N-terminal stretch at 1-19 (MKLSVTFIALMLTMTLTQG) is a signal peptide. Residues 20–47 (FVLQAIDGRDNSGLDDLSEADSMEHQLQ) constitute a propeptide that is removed on maturation.

It belongs to the conotoxin L superfamily. Post-translationally, contains 2 disulfide bonds. Expressed by the venom duct.

The protein resides in the secreted. This Californiconus californicus (California cone) protein is Conotoxin Cl14.8.